The chain runs to 88 residues: Small ribosomal subunit protein bS16c (88 aa).

It belongs to the bacterial ribosomal protein bS16 family.

The protein localises to the plastid. It is found in the chloroplast. In Helianthus annuus (Common sunflower), this protein is Small ribosomal subunit protein bS16c.